A 395-amino-acid chain; its full sequence is Carbamoyl phosphate synthase small chain (395 aa).

The interval 1 to 192 (MTYNLHPAIL…LQYKTDKMYG (192 aa)) is CPSase. 3 residues coordinate L-glutamine: S50, G244, and G246. Residues 196–383 (KIILIDFGVK…INLIKHFKQY (188 aa)) form the Glutamine amidotransferase type-1 domain. C273 acts as the Nucleophile in catalysis. The L-glutamine site is built by M274, Q277, N313, G315, and F316. Residues H356 and E358 contribute to the active site.

This sequence belongs to the CarA family. In terms of assembly, composed of two chains; the small (or glutamine) chain promotes the hydrolysis of glutamine to ammonia, which is used by the large (or ammonia) chain to synthesize carbamoyl phosphate. Tetramer of heterodimers (alpha,beta)4.

It localises to the plastid. It is found in the chloroplast. It catalyses the reaction hydrogencarbonate + L-glutamine + 2 ATP + H2O = carbamoyl phosphate + L-glutamate + 2 ADP + phosphate + 2 H(+). The enzyme catalyses L-glutamine + H2O = L-glutamate + NH4(+). It participates in amino-acid biosynthesis; L-arginine biosynthesis; carbamoyl phosphate from bicarbonate: step 1/1. It functions in the pathway pyrimidine metabolism; UMP biosynthesis via de novo pathway; (S)-dihydroorotate from bicarbonate: step 1/3. Its function is as follows. Small subunit of the glutamine-dependent carbamoyl phosphate synthetase (CPSase). CPSase catalyzes the formation of carbamoyl phosphate from the ammonia moiety of glutamine, carbonate, and phosphate donated by ATP, constituting the first step of 2 biosynthetic pathways, one leading to arginine and/or urea and the other to pyrimidine nucleotides. The small subunit (glutamine amidotransferase) binds and cleaves glutamine to supply the large subunit with the substrate ammonia. The sequence is that of Carbamoyl phosphate synthase small chain from Gracilaria tenuistipitata var. liui (Red alga).